We begin with the raw amino-acid sequence, 261 residues long: Potassium/proton antiporter CemA (261 aa).

Transmembrane regions (helical) follow at residues Phe47–Val67 and Ile138–Met158.

Belongs to the CemA family.

The protein localises to the plastid. It localises to the chloroplast inner membrane. The enzyme catalyses K(+)(in) + H(+)(out) = K(+)(out) + H(+)(in). Contributes to K(+)/H(+) antiport activity by supporting proton efflux to control proton extrusion and homeostasis in chloroplasts in a light-dependent manner to modulate photosynthesis. Prevents excessive induction of non-photochemical quenching (NPQ) under continuous-light conditions. Indirectly promotes efficient inorganic carbon uptake into chloroplasts. In Ginkgo biloba (Ginkgo), this protein is Potassium/proton antiporter CemA.